A 117-amino-acid polypeptide reads, in one-letter code: Holo-[acyl-carrier-protein] synthase (117 aa).

Positions 8 and 58 each coordinate Mg(2+).

This sequence belongs to the P-Pant transferase superfamily. AcpS family. Mg(2+) serves as cofactor.

It localises to the cytoplasm. It carries out the reaction apo-[ACP] + CoA = holo-[ACP] + adenosine 3',5'-bisphosphate + H(+). In terms of biological role, transfers the 4'-phosphopantetheine moiety from coenzyme A to a Ser of acyl-carrier-protein. The polypeptide is Holo-[acyl-carrier-protein] synthase (Shouchella clausii (strain KSM-K16) (Alkalihalobacillus clausii)).